We begin with the raw amino-acid sequence, 143 residues long: Ribosome maturation factor RimP (143 aa).

Belongs to the RimP family.

Its subcellular location is the cytoplasm. Its function is as follows. Required for maturation of 30S ribosomal subunits. The sequence is that of Ribosome maturation factor RimP from Neisseria meningitidis serogroup C / serotype 2a (strain ATCC 700532 / DSM 15464 / FAM18).